The primary structure comprises 434 residues: Alpha-enolase (434 aa).

At serine 2 the chain carries N-acetylserine. Serine 40 serves as a coordination point for Mg(2+). Phosphotyrosine is present on tyrosine 44. Lysine 60 carries the post-translational modification N6-acetyllysine; alternate. Lysine 60 carries the N6-succinyllysine; alternate modification. Lysine 71 carries the N6-acetyllysine modification. The residue at position 89 (lysine 89) is an N6-acetyllysine; alternate. N6-succinyllysine; alternate is present on lysine 89. 2 positions are modified to N6-acetyllysine: lysine 92 and lysine 126. The substrate site is built by histidine 158 and glutamate 167. N6-acetyllysine occurs at positions 193 and 199. The residue at position 202 (lysine 202) is an N6-acetyllysine; alternate. Lysine 202 is covalently cross-linked (Glycyl lysine isopeptide (Lys-Gly) (interchain with G-Cter in SUMO2); alternate). The Proton donor role is filled by glutamate 210. 2 positions are modified to N6-acetyllysine; alternate: lysine 228 and lysine 233. An N6-succinyllysine; alternate modification is found at lysine 228. Lysine 228 is modified (N6-(2-hydroxyisobutyryl)lysine; alternate). Residue lysine 233 is modified to N6-malonyllysine; alternate. Aspartate 245 is a Mg(2+) binding site. Serine 254 is modified (phosphoserine). Residue lysine 256 is modified to N6-acetyllysine. Residue serine 263 is modified to Phosphoserine. At lysine 281 the chain carries N6-acetyllysine; alternate. Residue lysine 281 is modified to N6-(2-hydroxyisobutyryl)lysine; alternate. Tyrosine 287 carries the phosphotyrosine modification. Residue serine 291 is modified to Phosphoserine. Residues glutamate 293 and aspartate 318 each contribute to the Mg(2+) site. Substrate contacts are provided by glutamate 293 and aspartate 318. 2 positions are modified to N6-acetyllysine: lysine 335 and lysine 343. Lysine 343 acts as the Proton acceptor in catalysis. Substrate is bound by residues 370–373 (SHRS) and lysine 394. The required for interaction with PLG stretch occupies residues 405 to 434 (AKYNQILRIEEELGSKAKFAGRSFRNPLAK). Lysine 406 bears the N6-acetyllysine mark. N6-acetyllysine; alternate is present on lysine 420. Lysine 420 is subject to N6-succinyllysine; alternate. Residue lysine 420 is modified to N6-malonyllysine; alternate.

It belongs to the enolase family. In terms of assembly, mammalian enolase is composed of 3 isozyme subunits, alpha, beta and gamma, which can form homodimers or heterodimers which are cell-type and development-specific. ENO1 interacts with PLG in the neuronal plasma membrane and promotes its activation. The C-terminal lysine is required for this binding. In vitro, interacts with several glycolytic enzymes including PKM, PGM, CKM and aldolase. Also binds troponin, in vitro. Interacts with ENO4 and PGAM2. Interacts with CMTM6. Mg(2+) serves as cofactor. ISGylated. In terms of processing, lysine 2-hydroxyisobutyrylation (Khib) by p300/EP300 activates the phosphopyruvate hydratase activity. As to expression, testis. Found in the principal piece of sperm tail (at protein level). The alpha/alpha homodimer is expressed in embryo and in most adult tissues. The alpha/beta heterodimer and the beta/beta homodimer are found in striated muscle, and the alpha/gamma heterodimer and the gamma/gamma homodimer in neurons. In striated muscle, expression of ENO1 appears to be independent of fiber type.

The protein resides in the cytoplasm. The protein localises to the cell membrane. It catalyses the reaction (2R)-2-phosphoglycerate = phosphoenolpyruvate + H2O. The protein operates within carbohydrate degradation; glycolysis; pyruvate from D-glyceraldehyde 3-phosphate: step 4/5. In terms of biological role, glycolytic enzyme the catalyzes the conversion of 2-phosphoglycerate to phosphoenolpyruvate. In addition to glycolysis, involved in various processes such as growth control, hypoxia tolerance and allergic responses. May also function in the intravascular and pericellular fibrinolytic system due to its ability to serve as a receptor and activator of plasminogen on the cell surface of several cell-types such as leukocytes and neurons. Stimulates immunoglobulin production. In Mus musculus (Mouse), this protein is Alpha-enolase (Eno1).